Consider the following 279-residue polypeptide: Eukaryotic translation initiation factor 3 subunit G (279 aa).

3 disordered regions span residues 1–26 (MSTG…IANP), 66–115 (RKNW…KAHE), and 152–171 (TPSG…AAGA). Ser78 carries the post-translational modification Phosphoserine. Residues 102 to 115 (KQDEKKEEEDKAHE) show a composition bias toward basic and acidic residues. Residues 152–163 (TPSGTTPEPTSE) show a composition bias toward low complexity. In terms of domain architecture, RRM spans 197 to 276 (TTLKVSQLNS…LILHLEWSKK (80 aa)).

Belongs to the eIF-3 subunit G family. Component of the eukaryotic translation initiation factor 3 (eIF-3) complex.

The protein resides in the cytoplasm. Functionally, RNA-binding component of the eukaryotic translation initiation factor 3 (eIF-3) complex, which is involved in protein synthesis of a specialized repertoire of mRNAs and, together with other initiation factors, stimulates binding of mRNA and methionyl-tRNAi to the 40S ribosome. The eIF-3 complex specifically targets and initiates translation of a subset of mRNAs involved in cell proliferation. This subunit can bind 18S rRNA. This chain is Eukaryotic translation initiation factor 3 subunit G, found in Candida albicans (strain SC5314 / ATCC MYA-2876) (Yeast).